A 375-amino-acid polypeptide reads, in one-letter code: Putative serine protease 47 (375 aa).

Positions 1-23 are cleaved as a signal peptide; sequence MGYCQGVSQVAVVLLMFPKEKEA. The segment at 41–60 is disordered; it reads DGQLPMGPHSRASQVAPETT. Residues 51–60 show a composition bias toward polar residues; that stretch reads RASQVAPETT. The 243-residue stretch at 81–323 folds into the Peptidase S1 domain; sequence IYGGRDAAAG…FINWIDEIMR (243 aa). A disulfide bridge links Cys106 with Cys122. Catalysis depends on charge relay system residues His121 and Asp172. Asn183 and Asn203 each carry an N-linked (GlcNAc...) asparagine glycan. Cys206 and Cys281 form a disulfide bridge. The active-site Charge relay system is the Ser275.

The protein belongs to the peptidase S1 family.

The protein localises to the secreted. This chain is Putative serine protease 47 (PRSS47P), found in Homo sapiens (Human).